Reading from the N-terminus, the 984-residue chain is Probable beta-galactosidase C (984 aa).

The signal sequence occupies residues 1–19 (MRLLNIFTTLCLLLWSGAA). Substrate is bound by residues Y78, N123, A124, E125, and N183. The active-site Proton donor is E184. Residue Y247 participates in substrate binding. Cysteines 253 and 300 form a disulfide. The N-linked (GlcNAc...) asparagine glycan is linked to N272. Residue E283 is the Nucleophile of the active site. Y349 lines the substrate pocket. 11 N-linked (GlcNAc...) asparagine glycosylation sites follow: N387, N433, N462, N516, N583, N599, N673, N716, N756, N860, and N870.

This sequence belongs to the glycosyl hydrolase 35 family.

It is found in the secreted. The catalysed reaction is Hydrolysis of terminal non-reducing beta-D-galactose residues in beta-D-galactosides.. Cleaves beta-linked terminal galactosyl residues from gangliosides, glycoproteins, and glycosaminoglycans. The sequence is that of Probable beta-galactosidase C (lacC) from Sclerotinia sclerotiorum (strain ATCC 18683 / 1980 / Ss-1) (White mold).